Consider the following 149-residue polypeptide: FKBP-type 16 kDa peptidyl-prolyl cis-trans isomerase (149 aa).

Positions 2–72 constitute a PPIase FKBP-type domain; sequence SESVQSNSAV…FSLEPDAAFG (71 aa).

This sequence belongs to the FKBP-type PPIase family.

The catalysed reaction is [protein]-peptidylproline (omega=180) = [protein]-peptidylproline (omega=0). Its function is as follows. PPIases accelerate the folding of proteins. Substrate specificity carried out with 'Suc-Ala-Xaa-Pro-Phe-4-nitroanilide', where Xaa is the amino acid tested, was found to be Phe &gt; Leu &gt;&gt; Ile &gt; Lys = Ala &gt; Trp &gt; His &gt;&gt; Gln. The sequence is that of FKBP-type 16 kDa peptidyl-prolyl cis-trans isomerase (fkpB) from Escherichia coli O6:H1 (strain CFT073 / ATCC 700928 / UPEC).